We begin with the raw amino-acid sequence, 375 residues long: Actin, cytoplasmic (375 aa).

It belongs to the actin family.

It localises to the cytoplasm. The protein localises to the cytoskeleton. The enzyme catalyses ATP + H2O = ADP + phosphate + H(+). In terms of biological role, actins are highly conserved proteins that are involved in various types of cell motility and are ubiquitously expressed in all eukaryotic cells. This Oxytricha trifallax (Sterkiella histriomuscorum) protein is Actin, cytoplasmic.